A 439-amino-acid polypeptide reads, in one-letter code: uncharacterized protein (439 aa).

The 144-residue stretch at 65 to 208 folds into the DAGKc domain; that stretch reads TRPKRVFVLV…VYAFELTTEG (144 aa).

This is an uncharacterized protein from Caenorhabditis elegans.